We begin with the raw amino-acid sequence, 506 residues long: Maturase K (506 aa).

This sequence belongs to the intron maturase 2 family. MatK subfamily.

The protein localises to the plastid. It is found in the chloroplast. Usually encoded in the trnK tRNA gene intron. Probably assists in splicing its own and other chloroplast group II introns. The protein is Maturase K of Jasminum nudiflorum (Winter jasmine).